Reading from the N-terminus, the 404-residue chain is Ubiquitin-like modifier-activating enzyme 5 (404 aa).

Serine 45 carries the post-translational modification Phosphoserine. Residues glycine 83, aspartate 104, lysine 127, asparagine 150, and asparagine 184 each coordinate ATP. 2 residues coordinate Zn(2+): cysteine 226 and cysteine 229. Cysteine 250 (glycyl thioester intermediate) is an active-site residue. Zn(2+)-binding residues include cysteine 303 and cysteine 308. Positions 334 to 346 match the UFM1-interacting sequence (UIS) motif; it reads IIHEDNEWGIELV. The segment at 347–377 is linker; that stretch reads SEISEEELKKSSGPIPDLPEGIIVAYTVPQK. A phosphoserine mark is found at serine 358 and serine 393. The short motif at 389-404 is the UFC1-binding sequence (UFC) element; the sequence is DSGESLEDLMAKMKNI.

It belongs to the ubiquitin-activating E1 family. UBA5 subfamily. As to quaternary structure, homodimer; homodimerization is required for UFM1 activation. Interacts (via UIS motif) with UFM1; binds UFM1 via a trans-binding mechanism in which UFM1 interacts with distinct sites in both subunits of the UBA5 homodimer. Interacts (via C-terminus) with UFC1. Interacts (via UIS motif) with GABARAPL2 and, with lower affinity, with GABARAP and GABARAPL1.

The protein resides in the cytoplasm. It is found in the nucleus. The protein localises to the endoplasmic reticulum membrane. Its subcellular location is the golgi apparatus. Its function is as follows. E1-like enzyme which specifically catalyzes the first step in ufmylation. Activates UFM1 by first adenylating its C-terminal glycine residue with ATP, and thereafter linking this residue to the side chain of a cysteine residue in E1, yielding a UFM1-E1 thioester and free AMP. Activates UFM1 via a trans-binding mechanism, in which UFM1 interacts with distinct sites in both subunits of the UBA5 homodimer. Trans-binding also promotes stabilization of the UBA5 homodimer, and enhances ATP-binding. Transfer of UFM1 from UBA5 to the E2-like enzyme UFC1 also takes place using a trans mechanism. Ufmylation plays a key role in various processes, such as ribosome recycling, response to DNA damage, interferon response or reticulophagy (also called ER-phagy). Ufmylation is essential for erythroid differentiation of both megakaryocytes and erythrocytes. The protein is Ubiquitin-like modifier-activating enzyme 5 of Bos taurus (Bovine).